A 350-amino-acid polypeptide reads, in one-letter code: MGENLFVGMAKGLRTWLESQHFVPLVTDVFLMLLAVVGVLAFLFLNALFLIYYDRKFGAWVQARLGPNRVGPRGIFQTVADTVKLFAKEIFIPNNVDRWPYLLAPVLIFTIPVMLFLVIPFGKGMVPYDLNLGVLYLVAITSVETIVLWMAGWSSNNKYSLLGAMRSVAQMLSYEMPVILAMLSVVMMAGSMKLSDIVAAQQKVWFIFLQPVGFLIYFIAVNAEFKRTPFDLVEGESEIISGPYTEYSGMNFALFFLAEYTNFMIGAIMVTTLFLGGWNAPFGWTFIPSWLWFIIKMYFVITLYMWTRWTFLRIRIDQMLNFAWKFLLPVSLANIFITGFGLYLYRMIRW.

8 consecutive transmembrane segments (helical) span residues 31 to 51 (LMLL…LFLI), 102 to 122 (LLAP…IPFG), 132 to 152 (LGVL…WMAG), 171 to 191 (MLSY…MAGS), 205 to 225 (WFIF…NAEF), 263 to 283 (FMIG…APFG), 286 to 306 (FIPS…LYMW), and 322 to 342 (FAWK…GFGL).

Belongs to the complex I subunit 1 family. As to quaternary structure, NDH-1 is composed of 14 different subunits. Subunits NuoA, H, J, K, L, M, N constitute the membrane sector of the complex.

It is found in the cell membrane. The catalysed reaction is a quinone + NADH + 5 H(+)(in) = a quinol + NAD(+) + 4 H(+)(out). Functionally, NDH-1 shuttles electrons from NADH, via FMN and iron-sulfur (Fe-S) centers, to quinones in the respiratory chain. The immediate electron acceptor for the enzyme in this species is believed to be ubiquinone. Couples the redox reaction to proton translocation (for every two electrons transferred, four hydrogen ions are translocated across the cytoplasmic membrane), and thus conserves the redox energy in a proton gradient. This subunit may bind ubiquinone. The sequence is that of NADH-quinone oxidoreductase subunit H from Carboxydothermus hydrogenoformans (strain ATCC BAA-161 / DSM 6008 / Z-2901).